We begin with the raw amino-acid sequence, 200 residues long: Peptidyl-tRNA hydrolase (200 aa).

Residue tyrosine 15 participates in tRNA binding. Catalysis depends on histidine 20, which acts as the Proton acceptor. Residues phenylalanine 66, asparagine 68, and asparagine 114 each coordinate tRNA.

The protein belongs to the PTH family. As to quaternary structure, monomer.

It localises to the cytoplasm. It carries out the reaction an N-acyl-L-alpha-aminoacyl-tRNA + H2O = an N-acyl-L-amino acid + a tRNA + H(+). Its function is as follows. Hydrolyzes ribosome-free peptidyl-tRNAs (with 1 or more amino acids incorporated), which drop off the ribosome during protein synthesis, or as a result of ribosome stalling. Catalyzes the release of premature peptidyl moieties from peptidyl-tRNA molecules trapped in stalled 50S ribosomal subunits, and thus maintains levels of free tRNAs and 50S ribosomes. This is Peptidyl-tRNA hydrolase from Ralstonia nicotianae (strain ATCC BAA-1114 / GMI1000) (Ralstonia solanacearum).